The primary structure comprises 363 residues: Chemerin-like receptor 1 (363 aa).

The Extracellular portion of the chain corresponds to 1–39 (MDFEDYNSTYEDSYTDDFDTIVALEEFSPLEGRVVRIFL). N7 carries N-linked (GlcNAc...) asparagine glycosylation. Residues 40–60 (VVVYSIICFLGILGNGLVIVI) traverse the membrane as a helical segment. Over 61–71 (ATFKMKKTVNT) the chain is Cytoplasmic. A helical transmembrane segment spans residues 72–92 (VWFLNLAVADFLFNVFLPIHI). Topologically, residues 93–109 (AYAAMDYHWVFGTAMCK) are extracellular. C108 and C185 are joined by a disulfide. A helical transmembrane segment spans residues 110–130 (ISNFLLIHNMYTSVFLLTVIS). The Cytoplasmic segment spans residues 131-152 (FDRCISVLLPVWSQNHRSIRLA). A helical transmembrane segment spans residues 153 to 173 (YMACVVIWVLAFFLSSPSLVF). Residues 174 to 220 (RDTAHLHGKISCFNNFSLSATSSSSWPTHPQMDTVGFGRQMVVTITR) are Extracellular-facing. The N-linked (GlcNAc...) asparagine glycan is linked to N188. A helical membrane pass occupies residues 221 to 241 (FLCGFLVPVLIISACYFTIVY). The Cytoplasmic segment spans residues 242–256 (KLRRNRLAKTKKPFK). A helical membrane pass occupies residues 257 to 277 (IIVTIIITFFLCWCPYHTLYL). At 278–283 (LELHHR) the chain is on the extracellular side. Residues 284–304 (AMPGSVFSLGVPLATAIAIAN) traverse the membrane as a helical segment. Residues 305 to 363 (SCMNPILYVFMGQDFKKFKVALFSRLVNALSEDTGHSSYPSHRSFTKMSSMNERETSML) lie on the Cytoplasmic side of the membrane. Phosphoserine is present on S335. Residues 337–363 (DTGHSSYPSHRSFTKMSSMNERETSML) are disordered. A Phosphothreonine modification is found at T338. Residues 340–355 (HSSYPSHRSFTKMSSM) are compositionally biased toward polar residues. S345, S348, and S354 each carry phosphoserine.

Belongs to the chemokine-like receptor (CMKLR) family. In terms of tissue distribution, predominantly expressed in spleen and temperately in adipose tissue.

The protein resides in the cell membrane. Functionally, receptor for the chemoattractant adipokine chemerin/RARRES2 and for the omega-3 fatty acid derived molecule resolvin E1. Interaction with RARRES2 initiates activation of G proteins G(i)/G(o) and beta-arrestin pathways inducing cellular responses via second messenger pathways such as intracellular calcium mobilization, phosphorylation of MAP kinases MAPK1/MAPK3 (ERK1/2), TYRO3, MAPK14/P38MAPK and PI3K leading to multifunctional effects, like, reduction of immune responses, enhancing of adipogenesis and angionesis. Resolvin E1 down-regulates cytokine production in macrophages by reducing the activation of MAPK1/3 (ERK1/2) and NF-kappa-B. Positively regulates adipogenesis and adipocyte metabolism. This is Chemerin-like receptor 1 (CMLKR1) from Sus scrofa (Pig).